The sequence spans 159 residues: Small ribosomal subunit protein uS15 (159 aa).

Residues 1-16 show a composition bias toward basic residues; sequence MNKRKEKGKSHSKRPV. The segment at 1 to 22 is disordered; that stretch reads MNKRKEKGKSHSKRPVRNTPPR.

It belongs to the universal ribosomal protein uS15 family. Part of the 30S ribosomal subunit.

This is Small ribosomal subunit protein uS15 from Ignicoccus hospitalis (strain KIN4/I / DSM 18386 / JCM 14125).